Consider the following 84-residue polypeptide: Small ribosomal subunit protein bS18 (84 aa).

Belongs to the bacterial ribosomal protein bS18 family. Part of the 30S ribosomal subunit. Forms a tight heterodimer with protein bS6.

Its function is as follows. Binds as a heterodimer with protein bS6 to the central domain of the 16S rRNA, where it helps stabilize the platform of the 30S subunit. The sequence is that of Small ribosomal subunit protein bS18 from Helicobacter hepaticus (strain ATCC 51449 / 3B1).